The chain runs to 378 residues: Probable endopolygalacturonase E (378 aa).

Residues 1–19 (MVTSSSVIVLTLWAALVSA) form the signal peptide. The propeptide occupies 20–38 (SPVADPLVTPAPKLEDLEK). Cys-43 and Cys-61 are oxidised to a cystine. PbH1 repeat units follow at residues 103 to 125 (GPLVSVSGTDITVTGADGAYLNG), 174 to 204 (STYLTMEDITIDNTDGDDGEAANTDGFDIGD), and 205 to 226 (STYITITGANVYNQDDCVAVNS). Asp-219 serves as the catalytic Proton donor. Cysteines 221 and 237 form a disulfide. Residue His-241 is part of the active site. 3 PbH1 repeats span residues 256–277 (VKNVTFYDSEIKSSQNGVRIKT), 285–307 (VSEVTYKEITLSDITDYGIVVEQ), and 317–345 (TDGITIEDFVLDNVQGSVESSGTNIYIVC). N-linked (GlcNAc...) asparagine glycosylation is present at Asn-258. Cystine bridges form between Cys-345–Cys-350 and Cys-369–Cys-378.

This sequence belongs to the glycosyl hydrolase 28 family.

It is found in the secreted. The catalysed reaction is (1,4-alpha-D-galacturonosyl)n+m + H2O = (1,4-alpha-D-galacturonosyl)n + (1,4-alpha-D-galacturonosyl)m.. Involved in maceration and soft-rotting of plant tissue. Hydrolyzes the 1,4-alpha glycosidic bonds of de-esterified pectate in the smooth region of the plant cell wall. This chain is Probable endopolygalacturonase E (pgaE), found in Aspergillus niger (strain ATCC MYA-4892 / CBS 513.88 / FGSC A1513).